The primary structure comprises 532 residues: Muscarinic acetylcholine receptor M5 (532 aa).

The Extracellular portion of the chain corresponds to 1–29 (MEGDSYHNATTVNGTPVYHQPLERHRLWE). The N-linked (GlcNAc...) asparagine glycan is linked to Asn-8. The helical transmembrane segment at 30 to 53 (VISIAAVTAVVSLITIVGNVLVMI) threads the bilayer. The Cytoplasmic portion of the chain corresponds to 54–66 (SFKVNSQLKTVNN). Residues 67 to 87 (YYLLSLACADLIIGIFSMNLY) form a helical membrane-spanning segment. Residues 88–104 (TTYILMGRWALGSLACD) are Extracellular-facing. An intrachain disulfide couples Cys-103 to Cys-183. The chain crosses the membrane as a helical span at residues 105–126 (LWLALDYVASNASVMNLLVISF). Over 127–146 (DRYFSITRPLTYRAKRTPKR) the chain is Cytoplasmic. Residues 147-169 (AGVMIGLAWLISFILWAPAILCW) traverse the membrane as a helical segment. At 170–191 (QYLVGKRTVPLDECQIQFLSEP) the chain is on the extracellular side. A helical transmembrane segment spans residues 192–214 (TITFGTAIAAFYIPVSVMTILYC). Residues 215 to 443 (RIYRETEKRT…LVKERKAAQT (229 aa)) lie on the Cytoplasmic side of the membrane. Residues 262-365 (AQRERNQTSW…SDTPNYFLSP (104 aa)) form a disordered region. Positions 269–281 (TSWSSSRRSASTS) are enriched in low complexity. Residues 282–308 (GKPSQATDPSTNQAKAEQLTTCSSYPS) are compositionally biased toward polar residues. Residues 444–464 (LSAILLAFIITWTPYNIMVLV) form a helical membrane-spanning segment. Residues 465 to 478 (STFCDKCVPVTLWH) are Extracellular-facing. Residues 479-498 (LGYWLCYVNSTVNPICYALC) form a helical membrane-spanning segment. Topologically, residues 499 to 532 (NRTFRKTFKMLLLCRWKKKKVEEKLYWQGNSKLP) are cytoplasmic. Phosphothreonine is present on residues Thr-501 and Thr-505.

Belongs to the G-protein coupled receptor 1 family. Muscarinic acetylcholine receptor subfamily. CHRM5 sub-subfamily.

Its subcellular location is the cell membrane. It localises to the postsynaptic cell membrane. Functionally, the muscarinic acetylcholine receptor mediates various cellular responses, including inhibition of adenylate cyclase, breakdown of phosphoinositides and modulation of potassium channels through the action of G proteins. Primary transducing effect is Pi turnover. In Macaca mulatta (Rhesus macaque), this protein is Muscarinic acetylcholine receptor M5 (CHRM5).